Reading from the N-terminus, the 70-residue chain is Large ribosomal subunit protein bL31 (70 aa).

Positions 16, 18, 37, and 40 each coordinate Zn(2+).

It belongs to the bacterial ribosomal protein bL31 family. Type A subfamily. Part of the 50S ribosomal subunit. Zn(2+) is required as a cofactor.

Binds the 23S rRNA. The chain is Large ribosomal subunit protein bL31 from Shewanella frigidimarina (strain NCIMB 400).